Consider the following 227-residue polypeptide: 27 kDa glycoprotein (227 aa).

An N-terminal signal peptide occupies residues 1–17 (MMWKTVLITIFAAGVLA). N-linked (GlcNAc...) asparagine glycosylation is found at Asn118 and Asn173.

It belongs to the UPF0408 family. Expressed in the subesophageal body, fat bodies, hemocytes, midgut and Malpighian tubules. Not expressed in silk glands.

The protein resides in the secreted. The polypeptide is 27 kDa glycoprotein (Bombyx mori (Silk moth)).